We begin with the raw amino-acid sequence, 148 residues long: Large ribosomal subunit protein bL9 (148 aa).

Belongs to the bacterial ribosomal protein bL9 family.

Its function is as follows. Binds to the 23S rRNA. The sequence is that of Large ribosomal subunit protein bL9 from Stutzerimonas stutzeri (strain A1501) (Pseudomonas stutzeri).